Consider the following 159-residue polypeptide: Small ribosomal subunit protein uS17 (159 aa).

Belongs to the universal ribosomal protein uS17 family.

The sequence is that of Small ribosomal subunit protein uS17 (RPS11) from Euphorbia esula (Leafy spurge).